Here is a 206-residue protein sequence, read N- to C-terminus: Anti-sigma-W factor RsiW (206 aa).

Over 1–87 (MSCPEHIVQL…ASINRWLKAH (87 aa)) the chain is Cytoplasmic. Residues H30, C34, and C37 each contribute to the Zn(2+) site. A helical transmembrane segment spans residues 88–108 (PFLVAAALFAILMGGSFFSSW). The Extracellular segment spans residues 109–206 (KNDHDFSVSS…SVFGVKESKE (98 aa)).

It belongs to the zinc-associated anti-sigma factor (ZAS) superfamily. Anti-sigma-W factor family. The cofactor is Zn(2+). In terms of processing, is processed by three successive proteolytic events. First, the extracellular region of RsiW is cleaved by PrsW (Site-1 cleavage) in response to cell envelope stresses. Next, it undergoes cleavage at an intramembrane site (Site-2 cleavage) mediated by RasP. This cleavage uncovers a cryptic proteolytic tag with conserved alanine residues in the transmembrane segment, that is recognized mainly by the ClpXP protease, which completely degrades the protein in the cytoplasm and leads to the induction of the sigma-W-controlled genes.

It is found in the membrane. Functionally, is the anti-sigma factor for SigW. The presence of RsiW leads to the inactivation of SigW, and its proteolytic destruction to sigma-W activation. This is Anti-sigma-W factor RsiW (rsiW) from Bacillus licheniformis (strain ATCC 14580 / DSM 13 / JCM 2505 / CCUG 7422 / NBRC 12200 / NCIMB 9375 / NCTC 10341 / NRRL NRS-1264 / Gibson 46).